A 221-amino-acid polypeptide reads, in one-letter code: Endo-1,4-beta-xylanase A (221 aa).

The first 16 residues, 1–16 (MKFFATIAALVVGAVA), serve as a signal peptide directing secretion. The GH11 domain maps to 29–221 (PMLIERAGPG…GTGSASVTVS (193 aa)). The active-site Nucleophile is Glu-114. Catalysis depends on Glu-208, which acts as the Proton donor.

It belongs to the glycosyl hydrolase 11 (cellulase G) family.

It localises to the secreted. The enzyme catalyses Endohydrolysis of (1-&gt;4)-beta-D-xylosidic linkages in xylans.. It functions in the pathway glycan degradation; xylan degradation. Functionally, endo-1,4-beta-xylanase involved in the hydrolysis of xylan, a major structural heterogeneous polysaccharide found in plant biomass representing the second most abundant polysaccharide in the biosphere, after cellulose. This Aureobasidium pullulans (Black yeast) protein is Endo-1,4-beta-xylanase A (xynA).